Reading from the N-terminus, the 199-residue chain is ATP-dependent Clp protease proteolytic subunit (199 aa).

The active-site Nucleophile is the S97. The active site involves H122.

Belongs to the peptidase S14 family. In terms of assembly, fourteen ClpP subunits assemble into 2 heptameric rings which stack back to back to give a disk-like structure with a central cavity, resembling the structure of eukaryotic proteasomes.

It localises to the cytoplasm. The enzyme catalyses Hydrolysis of proteins to small peptides in the presence of ATP and magnesium. alpha-casein is the usual test substrate. In the absence of ATP, only oligopeptides shorter than five residues are hydrolyzed (such as succinyl-Leu-Tyr-|-NHMec, and Leu-Tyr-Leu-|-Tyr-Trp, in which cleavage of the -Tyr-|-Leu- and -Tyr-|-Trp bonds also occurs).. Cleaves peptides in various proteins in a process that requires ATP hydrolysis. Has a chymotrypsin-like activity. Plays a major role in the degradation of misfolded proteins. The sequence is that of ATP-dependent Clp protease proteolytic subunit from Geobacter metallireducens (strain ATCC 53774 / DSM 7210 / GS-15).